The primary structure comprises 186 residues: Secreted chorismate mutase (186 aa).

An N-terminal signal peptide occupies residues methionine 1–alanine 30. The region spanning glutamine 31 to arginine 107 is the Chorismate mutase domain. The cysteines at positions 33 and 148 are disulfide-linked. Substrate contacts are provided by residues arginine 43, lysine 54, aspartate 63, alanine 99–glutamine 103, and arginine 127.

Homodimer.

The protein localises to the periplasm. It catalyses the reaction chorismate = prephenate. It participates in metabolic intermediate biosynthesis; prephenate biosynthesis; prephenate from chorismate: step 1/1. Catalyzes the Claisen rearrangement of chorismate to prephenate. May play some role in the pathogenicity. In Yersinia pestis, this protein is Secreted chorismate mutase (pheA2).